The primary structure comprises 338 residues: Glycerol-3-phosphate dehydrogenase [NAD(P)+] (338 aa).

Residues serine 13, tryptophan 14, and lysine 108 each coordinate NADPH. Residues lysine 108, glycine 139, and serine 141 each contribute to the sn-glycerol 3-phosphate site. Alanine 143 contributes to the NADPH binding site. Lysine 194, aspartate 247, serine 257, arginine 258, and asparagine 259 together coordinate sn-glycerol 3-phosphate. Lysine 194 serves as the catalytic Proton acceptor. Residue arginine 258 participates in NADPH binding. NADPH is bound by residues valine 282 and glutamate 284.

This sequence belongs to the NAD-dependent glycerol-3-phosphate dehydrogenase family.

Its subcellular location is the cytoplasm. It carries out the reaction sn-glycerol 3-phosphate + NAD(+) = dihydroxyacetone phosphate + NADH + H(+). The enzyme catalyses sn-glycerol 3-phosphate + NADP(+) = dihydroxyacetone phosphate + NADPH + H(+). Its pathway is membrane lipid metabolism; glycerophospholipid metabolism. Its function is as follows. Catalyzes the reduction of the glycolytic intermediate dihydroxyacetone phosphate (DHAP) to sn-glycerol 3-phosphate (G3P), the key precursor for phospholipid synthesis. The chain is Glycerol-3-phosphate dehydrogenase [NAD(P)+] from Streptococcus pneumoniae (strain JJA).